The following is a 144-amino-acid chain: Large ribosomal subunit protein uL15 (144 aa).

Positions 1 to 62 (MELNNLKPAE…GQMPLQRRLP (62 aa)) are disordered. The segment covering 21 to 31 (RGIGSGLGKTA) has biased composition (gly residues).

Belongs to the universal ribosomal protein uL15 family. Part of the 50S ribosomal subunit.

Its function is as follows. Binds to the 23S rRNA. This is Large ribosomal subunit protein uL15 from Paraburkholderia phymatum (strain DSM 17167 / CIP 108236 / LMG 21445 / STM815) (Burkholderia phymatum).